Consider the following 591-residue polypeptide: Phosphoglucan phosphatase LSF1, chloroplastic (591 aa).

The transit peptide at 1-61 directs the protein to the chloroplast; that stretch reads MAFLQQISGL…RRRRVVLRVV (61 aa). Residues 291-453 enclose the Tyrosine-protein phosphatase domain; it reads RYSKITEQIY…VDDGKHDGTP (163 aa). Cys390 functions as the Phosphocysteine intermediate in the catalytic mechanism. Substrate is bound at residue 390-396; it reads CTTGFDR.

The protein resides in the plastid. It is found in the chloroplast. Starch granule-associated phosphoglucan phosphatase involved in the control of starch accumulation. Participates in the regulation of the initial steps of starch degradation at the granule surface. May release a different set of phosphate groups from those removed by DSP4. This is Phosphoglucan phosphatase LSF1, chloroplastic (LSF1) from Arabidopsis thaliana (Mouse-ear cress).